The following is a 171-amino-acid chain: Transcription antitermination protein NusB (171 aa).

The protein belongs to the NusB family.

In terms of biological role, involved in transcription antitermination. Required for transcription of ribosomal RNA (rRNA) genes. Binds specifically to the boxA antiterminator sequence of the ribosomal RNA (rrn) operons. In Brucella abortus (strain S19), this protein is Transcription antitermination protein NusB.